Consider the following 119-residue polypeptide: Holo-[acyl-carrier-protein] synthase (119 aa).

Asp-8 and Glu-58 together coordinate Mg(2+).

The protein belongs to the P-Pant transferase superfamily. AcpS family. The cofactor is Mg(2+).

It localises to the cytoplasm. The enzyme catalyses apo-[ACP] + CoA = holo-[ACP] + adenosine 3',5'-bisphosphate + H(+). Functionally, transfers the 4'-phosphopantetheine moiety from coenzyme A to a Ser of acyl-carrier-protein. The sequence is that of Holo-[acyl-carrier-protein] synthase from Halalkalibacterium halodurans (strain ATCC BAA-125 / DSM 18197 / FERM 7344 / JCM 9153 / C-125) (Bacillus halodurans).